The chain runs to 102 residues: MQNQKIRIRLKAFDYRLIDQSAAEIVDTAKRTGAIVKGPVPLPTRIQRFDILRSPHVNKTSRDQFEIRTHQRLMDIVDPTDKTVDALMKLDLPAGVDVEIKV.

The protein belongs to the universal ribosomal protein uS10 family. In terms of assembly, part of the 30S ribosomal subunit.

In terms of biological role, involved in the binding of tRNA to the ribosomes. The sequence is that of Small ribosomal subunit protein uS10 from Cupriavidus metallidurans (strain ATCC 43123 / DSM 2839 / NBRC 102507 / CH34) (Ralstonia metallidurans).